The following is a 146-amino-acid chain: 3-dehydroquinate dehydratase (146 aa).

Tyrosine 23 acts as the Proton acceptor in catalysis. Residues asparagine 74, histidine 80, and aspartate 87 each contribute to the substrate site. Residue histidine 100 is the Proton donor of the active site. Residues isoleucine 101–serine 102 and arginine 111 each bind substrate.

This sequence belongs to the type-II 3-dehydroquinase family. As to quaternary structure, homododecamer.

The catalysed reaction is 3-dehydroquinate = 3-dehydroshikimate + H2O. Its pathway is metabolic intermediate biosynthesis; chorismate biosynthesis; chorismate from D-erythrose 4-phosphate and phosphoenolpyruvate: step 3/7. Its function is as follows. Catalyzes a trans-dehydration via an enolate intermediate. The protein is 3-dehydroquinate dehydratase of Bacillus cereus (strain AH820).